A 338-amino-acid polypeptide reads, in one-letter code: Ketol-acid reductoisomerase (NADP(+)) (338 aa).

The 181-residue stretch at 1–181 (MQVYYDKDCD…GGGRSGIIET (181 aa)) folds into the KARI N-terminal Rossmann domain. NADP(+)-binding positions include 24–27 (YGSQ), arginine 47, serine 50, serine 52, and 82–85 (DEFQ). The active site involves histidine 107. An NADP(+)-binding site is contributed by glycine 133. The 146-residue stretch at 182–327 (TFKDETETDL…GKLRAMMPWI (146 aa)) folds into the KARI C-terminal knotted domain. Mg(2+) is bound by residues aspartate 190, glutamate 194, glutamate 226, and glutamate 230. Position 251 (serine 251) interacts with substrate.

This sequence belongs to the ketol-acid reductoisomerase family. Mg(2+) is required as a cofactor.

The catalysed reaction is (2R)-2,3-dihydroxy-3-methylbutanoate + NADP(+) = (2S)-2-acetolactate + NADPH + H(+). It carries out the reaction (2R,3R)-2,3-dihydroxy-3-methylpentanoate + NADP(+) = (S)-2-ethyl-2-hydroxy-3-oxobutanoate + NADPH + H(+). It participates in amino-acid biosynthesis; L-isoleucine biosynthesis; L-isoleucine from 2-oxobutanoate: step 2/4. It functions in the pathway amino-acid biosynthesis; L-valine biosynthesis; L-valine from pyruvate: step 2/4. Involved in the biosynthesis of branched-chain amino acids (BCAA). Catalyzes an alkyl-migration followed by a ketol-acid reduction of (S)-2-acetolactate (S2AL) to yield (R)-2,3-dihydroxy-isovalerate. In the isomerase reaction, S2AL is rearranged via a Mg-dependent methyl migration to produce 3-hydroxy-3-methyl-2-ketobutyrate (HMKB). In the reductase reaction, this 2-ketoacid undergoes a metal-dependent reduction by NADPH to yield (R)-2,3-dihydroxy-isovalerate. The sequence is that of Ketol-acid reductoisomerase (NADP(+)) from Saccharophagus degradans (strain 2-40 / ATCC 43961 / DSM 17024).